The following is a 1073-amino-acid chain: Carbamoyl phosphate synthase large chain (1073 aa).

The segment at 1–403 (MPKRTDIKSI…SLQKALRGLE (403 aa)) is carboxyphosphate synthetic domain. Arg-129, Arg-169, Gly-175, Gly-176, Glu-208, Leu-210, Glu-215, Gly-241, Val-242, His-243, Gln-285, and Glu-299 together coordinate ATP. Residues 133–328 (DKAMKSIGLA…IARVAAKLAV (196 aa)) form the ATP-grasp 1 domain. Mg(2+) contacts are provided by Gln-285, Glu-299, and Asn-301. Residues Gln-285, Glu-299, and Asn-301 each contribute to the Mn(2+) site. An oligomerization domain region spans residues 404–553 (VGVCGLDPKL…YSTYEEECEA (150 aa)). A carbamoyl phosphate synthetic domain region spans residues 554 to 935 (NPSTRDKIMI…AFAKAQMGAS (382 aa)). An ATP-grasp 2 domain is found at 678–869 (QQMVERLNLR…LAMIAARVMA (192 aa)). Positions 714, 753, 755, 760, 785, 786, 787, 788, 828, and 840 each coordinate ATP. The Mg(2+) site is built by Gln-828, Glu-840, and Asn-842. Positions 828, 840, and 842 each coordinate Mn(2+). The MGS-like domain occupies 936–1073 (EVLPTGGTAF…LQDLHAGLKA (138 aa)). Residues 936–1073 (EVLPTGGTAF…LQDLHAGLKA (138 aa)) form an allosteric domain region.

It belongs to the CarB family. Composed of two chains; the small (or glutamine) chain promotes the hydrolysis of glutamine to ammonia, which is used by the large (or ammonia) chain to synthesize carbamoyl phosphate. Tetramer of heterodimers (alpha,beta)4. The cofactor is Mg(2+). Mn(2+) serves as cofactor.

It catalyses the reaction hydrogencarbonate + L-glutamine + 2 ATP + H2O = carbamoyl phosphate + L-glutamate + 2 ADP + phosphate + 2 H(+). It carries out the reaction hydrogencarbonate + NH4(+) + 2 ATP = carbamoyl phosphate + 2 ADP + phosphate + 2 H(+). It functions in the pathway amino-acid biosynthesis; L-arginine biosynthesis; carbamoyl phosphate from bicarbonate: step 1/1. The protein operates within pyrimidine metabolism; UMP biosynthesis via de novo pathway; (S)-dihydroorotate from bicarbonate: step 1/3. Functionally, large subunit of the glutamine-dependent carbamoyl phosphate synthetase (CPSase). CPSase catalyzes the formation of carbamoyl phosphate from the ammonia moiety of glutamine, carbonate, and phosphate donated by ATP, constituting the first step of 2 biosynthetic pathways, one leading to arginine and/or urea and the other to pyrimidine nucleotides. The large subunit (synthetase) binds the substrates ammonia (free or transferred from glutamine from the small subunit), hydrogencarbonate and ATP and carries out an ATP-coupled ligase reaction, activating hydrogencarbonate by forming carboxy phosphate which reacts with ammonia to form carbamoyl phosphate. This chain is Carbamoyl phosphate synthase large chain, found in Pseudomonas syringae pv. tomato (strain ATCC BAA-871 / DC3000).